The primary structure comprises 602 residues: MSSDPMRNIRNFSIIAHVDHGKSTLADRIIQLCGGLEAREMEAQVLDSNPIERERGITIKAQSVSLLYKAQDGQNYHLNLIDTPGHVDFSYEVSRSLAACEGALLVVDASQGVEAQSVANCYTAVEQGLEVVPILNKIDLPTADTERAKAEIEAVIGIDASEAVAVSAKTGLYVEQVLEAIVQRIPAPQPRDTEKLQALIIDSWFDNYLGVVSLVRVMQGEITPGAKLLVMSTGRSHPVDAVGVFTPKRKTLAKLTAGEVGWVTASIKDVHGAPVGDTLTLANDPAPKPLPGFQEVQPRVFAGLFPVDAEDYPDLREALEKLRLNDAALRFEPENSEAMGFGFRCGFLGMLHMEIVQERLEREYDLNLITTAPTVIYEVLKTDGTLVAMDNPAKMPPINQINEIREPIIRSNILTPPEYVGAVITLCEEKRGSQIGITYLGNQVQVAYELPMAEVVLDFFDKLKSVTRGYASLDYHFLRFQEGPFVRVDTLINGDRVDALSVIVHRHQAERRGRELCEKMKDLIPRQMFDVAIQAAIGSQIISRSTVKAMRKNVLAKCYGGDISRKKKLLEKQKEGKKRMKQIGRVEIPQEAFLAVLQIDNK.

One can recognise a tr-type G domain in the interval 7–189 (RNIRNFSIIA…AIVQRIPAPQ (183 aa)). GTP is bound by residues 19 to 24 (DHGKST) and 136 to 139 (NKID).

This sequence belongs to the TRAFAC class translation factor GTPase superfamily. Classic translation factor GTPase family. LepA subfamily.

The protein resides in the cell inner membrane. It carries out the reaction GTP + H2O = GDP + phosphate + H(+). In terms of biological role, required for accurate and efficient protein synthesis under certain stress conditions. May act as a fidelity factor of the translation reaction, by catalyzing a one-codon backward translocation of tRNAs on improperly translocated ribosomes. Back-translocation proceeds from a post-translocation (POST) complex to a pre-translocation (PRE) complex, thus giving elongation factor G a second chance to translocate the tRNAs correctly. Binds to ribosomes in a GTP-dependent manner. The sequence is that of Elongation factor 4 from Xylella fastidiosa (strain 9a5c).